Here is a 192-residue protein sequence, read N- to C-terminus: MKLLEEFIQEKGTVLPGNVLKVDAFLNHQIDPVLMQAMGNEFAKRFQDLGITKIVTIESSGIAPAVFAGLALSVPVVFARKKKSVTLTDNLFTSTVYSYTKKESNDISVSKQFLTADDTILVIDDFLANGQAALGLLEIAEHAGAKVAGIGIVIEKSFQQGRELLNKTGIPVYSLARIASLENEEILFLEEE.

Xanthine contacts are provided by Leu20 and Asn27. 128–132 is a binding site for 5-phospho-alpha-D-ribose 1-diphosphate; the sequence is ANGQA. Lys156 serves as a coordination point for xanthine.

Belongs to the purine/pyrimidine phosphoribosyltransferase family. Xpt subfamily. In terms of assembly, homodimer.

Its subcellular location is the cytoplasm. It carries out the reaction XMP + diphosphate = xanthine + 5-phospho-alpha-D-ribose 1-diphosphate. It functions in the pathway purine metabolism; XMP biosynthesis via salvage pathway; XMP from xanthine: step 1/1. Its function is as follows. Converts the preformed base xanthine, a product of nucleic acid breakdown, to xanthosine 5'-monophosphate (XMP), so it can be reused for RNA or DNA synthesis. The protein is Xanthine phosphoribosyltransferase of Listeria monocytogenes serotype 4b (strain F2365).